A 698-amino-acid chain; its full sequence is Voltage-dependent calcium channel beta subunit-associated regulatory protein (698 aa).

The Extracellular portion of the chain corresponds to 1–41 (MQPTATMATAAATTATVALTTSWDNATSRPTAEPDPILDNY). An N-linked (GlcNAc...) asparagine glycan is attached at N25. The chain crosses the membrane as a helical; Signal-anchor for type III membrane protein span at residues 42 to 62 (VLLVVVMSLFVGGTLVVLSGV). Residues 63–698 (LLLCKRCWEV…APTSPDHSPA (636 aa)) are Cytoplasmic-facing. 2 disordered regions span residues 90-124 (YLDN…TSST) and 185-275 (ASAA…SSGS). Low complexity predominate over residues 185–197 (ASAAATPHPATTS). Residues S290 and S295 each carry the phosphoserine modification. Disordered regions lie at residues 308–339 (SQRA…EQEG), 360–421 (PPPR…HAQC), 438–536 (ATAS…RRDY), and 554–648 (PHFD…GSGL). Residues 360–375 (PPPRPFLASPTSPPPT) are compositionally biased toward pro residues. The span at 402-413 (PEHAQQQDPQQE) shows a compositional bias: low complexity. Residues 459 to 468 (SGSGSGGGGA) are compositionally biased toward gly residues. Over residues 471–482 (AFPPPPESPPAL) the composition is skewed to pro residues. The span at 483–493 (RPKDGEARRLL) shows a compositional bias: basic and acidic residues. Phosphoserine is present on residues S501, S520, and S524. Residues 562–576 (HRTRAHPHTHARKQW) are compositionally biased toward basic residues. S610 carries the phosphoserine modification. A Phosphothreonine modification is found at T691. 2 positions are modified to phosphoserine: S692 and S696.

In terms of assembly, interacts with voltage-dependent calcium channels CACNB1, CACNB2, CACNB3 and CACNB4 beta subunits; prevents their interaction with the CACNA1C alpha subunit thereby negatively regulating the activity of the corresponding calcium channels. As to expression, expressed by neurons in the cortex, cerebellum and hippocampus and by pancreatic beta cells (at protein level).

The protein resides in the cytoplasmic vesicle. It is found in the secretory vesicle. Its subcellular location is the synaptic vesicle membrane. The protein localises to the cell membrane. It localises to the cell projection. The protein resides in the growth cone. Functionally, negatively regulates voltage-gated calcium channels by preventing the interaction between their alpha and beta subunits. Thereby, negatively regulates calcium channels activity at the plasma membrane and indirectly inhibits calcium-regulated exocytosis. The chain is Voltage-dependent calcium channel beta subunit-associated regulatory protein from Mus musculus (Mouse).